Reading from the N-terminus, the 91-residue chain is Protein YchS (91 aa).

This Escherichia coli O157:H7 protein is Protein YchS (ychS).